The primary structure comprises 539 residues: Cytochrome c oxidase subunit 1 homolog (539 aa).

2 helical membrane passes run 28–48 (LFAA…LLLL) and 75–95 (GVMA…VVAL). A heme b-binding site is contributed by H117. The next 11 membrane-spanning stretches (helical) occupy residues 118–138 (TSAV…FYVV), 154–174 (FVFW…LLGI), 187–207 (VDLW…GTIL), 214–234 (ISVA…LHIV), 265–285 (GHNA…YYFI), 298–318 (LSII…PHHL), 330–350 (LGMV…INGL), 368–388 (MMVM…MMSI), 402–422 (IGHV…GAIY), 443–463 (HFWL…VAGI), and 498–518 (LGGL…TMTI). H266, H316, and H317 together coordinate Cu cation. The heme b site is built by H404 and H406.

Belongs to the heme-copper respiratory oxidase family. Requires Cu(2+) as cofactor. Heme b is required as a cofactor.

It is found in the cell membrane. The enzyme catalyses 4 Fe(II)-[cytochrome c] + O2 + 8 H(+)(in) = 4 Fe(III)-[cytochrome c] + 2 H2O + 4 H(+)(out). It participates in energy metabolism; oxidative phosphorylation. In terms of biological role, cytochrome c oxidase is the component of the respiratory chain that catalyzes the reduction of oxygen to water. Subunits 1-3 form the functional core of the enzyme complex. Co I is the catalytic subunit of the enzyme. Electrons originating in cytochrome c or a quinol are transferred to the bimetallic center formed by a high-spin heme and copper B. This Agrobacterium tumefaciens (strain T37) protein is Cytochrome c oxidase subunit 1 homolog (fixN).